Reading from the N-terminus, the 473-residue chain is UDP-N-acetylmuramate--L-alanine ligase (473 aa).

115-121 (GTHGKTT) provides a ligand contact to ATP.

This sequence belongs to the MurCDEF family.

The protein localises to the cytoplasm. The catalysed reaction is UDP-N-acetyl-alpha-D-muramate + L-alanine + ATP = UDP-N-acetyl-alpha-D-muramoyl-L-alanine + ADP + phosphate + H(+). The protein operates within cell wall biogenesis; peptidoglycan biosynthesis. Its function is as follows. Cell wall formation. The polypeptide is UDP-N-acetylmuramate--L-alanine ligase (Rhizorhabdus wittichii (strain DSM 6014 / CCUG 31198 / JCM 15750 / NBRC 105917 / EY 4224 / RW1) (Sphingomonas wittichii)).